Reading from the N-terminus, the 361-residue chain is Ribosomal RNA large subunit methyltransferase M (361 aa).

S-adenosyl-L-methionine is bound by residues Ser-187, 220 to 223 (CPGG), Asp-239, Asp-259, and Asp-276. Lys-305 acts as the Proton acceptor in catalysis.

It belongs to the class I-like SAM-binding methyltransferase superfamily. RNA methyltransferase RlmE family. RlmM subfamily. Monomer.

Its subcellular location is the cytoplasm. It carries out the reaction cytidine(2498) in 23S rRNA + S-adenosyl-L-methionine = 2'-O-methylcytidine(2498) in 23S rRNA + S-adenosyl-L-homocysteine + H(+). Catalyzes the 2'-O-methylation at nucleotide C2498 in 23S rRNA. The chain is Ribosomal RNA large subunit methyltransferase M from Shewanella sp. (strain MR-7).